Reading from the N-terminus, the 337-residue chain is CMP-N-acetylneuraminate-beta-galactosamide-alpha-2,3-sialyltransferase 1 (337 aa).

At 1–4 (MRRK) the chain is on the cytoplasmic side. Residues 5–25 (TLKYLTFFLLFIFLTSFVLNY) traverse the membrane as a helical; Signal-anchor for type II membrane protein segment. At 26–337 (SNTGVPSAWF…INKIRIFKGR (312 aa)) the chain is on the lumenal side. 3 cysteine pairs are disulfide-bonded: cysteine 56–cysteine 61, cysteine 58–cysteine 136, and cysteine 139–cysteine 278. A glycan (N-linked (GlcNAc...) asparagine) is linked at asparagine 76. A substrate-binding site is contributed by glutamine 102. Asparagine 109 is a glycosylation site (N-linked (GlcNAc...) asparagine). The substrate site is built by asparagine 144, asparagine 167, tyrosine 227, tyrosine 263, glycine 267, glycine 287, histidine 296, and histidine 313. Asparagine 320 is a glycosylation site (N-linked (GlcNAc...) asparagine).

The protein belongs to the glycosyltransferase 29 family. Post-translationally, the soluble form derives from the membrane form by proteolytic processing. In terms of tissue distribution, highly expressed in submaxillary gland and to a much lesser extent in liver, lung, kidney, heart and brain.

The protein localises to the golgi apparatus. It is found in the golgi stack membrane. The protein resides in the trans-Golgi network membrane. Its subcellular location is the secreted. The enzyme catalyses a beta-D-galactosyl-(1-&gt;3)-N-acetyl-alpha-D-galactosaminyl derivative + CMP-N-acetyl-beta-neuraminate = an N-acetyl-alpha-neuraminyl-(2-&gt;3)-beta-D-galactosyl-(1-&gt;3)-N-acetyl-alpha-D-galactosaminyl derivative + CMP + H(+). It catalyses the reaction a ganglioside GM1 (d18:1(4E)) + CMP-N-acetyl-beta-neuraminate = a ganglioside GD1a (d18:1(4E)) + CMP + H(+). It carries out the reaction ganglioside GM1 (d18:1(4E)/18:0) + CMP-N-acetyl-beta-neuraminate = ganglioside GD1a (18:1(4E)/18:0) + CMP + H(+). The catalysed reaction is a ganglioside GA1 + CMP-N-acetyl-beta-neuraminate = a ganglioside GM1b + CMP + H(+). The enzyme catalyses a ganglioside GA1 (d18:1(4E)) + CMP-N-acetyl-beta-neuraminate = a ganglioside GM1b (d18:1(4E)) + CMP + H(+). It catalyses the reaction a ganglioside GD1b + CMP-N-acetyl-beta-neuraminate = a ganglioside GT1b + CMP + H(+). It carries out the reaction a 3-O-[beta-D-galactosyl-(1-&gt;3)-N-acetyl-alpha-D-galactosaminyl]-L-threonyl-[protein] + CMP-N-acetyl-beta-neuraminate = a 3-O-[N-acetyl-alpha-neuraminyl-(2-&gt;3)-beta-D-galactosyl-(1-&gt;3)-N-acetyl-alpha-D-galactosaminyl]-L-threonyl-[protein] + CMP + H(+). The catalysed reaction is a 3-O-[beta-D-galactosyl-(1-&gt;3)-N-acetyl-alpha-D-galactosaminyl]-L-seryl-[protein] + CMP-N-acetyl-beta-neuraminate = 3-O-[N-acetyl-alpha-neuraminyl-(2-&gt;3)-beta-D-galactosyl-(1-&gt;3)-N-acetyl-alpha-D-galactosaminyl]-L-seryl-[protein] + CMP + H(+). The protein operates within protein modification; protein glycosylation. It participates in glycolipid biosynthesis. Functionally, a beta-galactoside alpha2-&gt;3 sialyltransferase involved in terminal sialylation of glycoproteins and glycolipids. Catalyzes the transfer of sialic acid (N-acetyl-neuraminic acid; Neu5Ac) from the nucleotide sugar donor CMP-Neu5Ac onto acceptor Galbeta-(1-&gt;3)-GalNAc-terminated glycoconjugates through an alpha2-3 linkage. Adds sialic acid to the core 1 O-glycan, Galbeta-(1-&gt;3)-GalNAc-O-Ser/Thr, which is a major structure of mucin-type O-glycans. As part of a homeostatic mechanism that regulates CD8-positive T cell numbers, sialylates core 1 O-glycans of T cell glycoproteins, SPN/CD43 and PTPRC/CD45. Prevents premature apoptosis of thymic CD8-positive T cells prior to peripheral emigration, whereas in the secondary lymphoid organs controls the survival of CD8-positive memory T cells generated following a successful immune response. Transfers sialic acid to asialofetuin, presumably onto Galbeta-(1-&gt;3)-GalNAc-O-Ser. Sialylates GM1a, GA1 and GD1b gangliosides to form GD1a, GM1b and GT1b, respectively. The polypeptide is CMP-N-acetylneuraminate-beta-galactosamide-alpha-2,3-sialyltransferase 1 (St3gal1) (Mus musculus (Mouse)).